Here is a 492-residue protein sequence, read N- to C-terminus: Cytochrome P450 2B19 (492 aa).

A Phosphoserine; by PKA modification is found at S129. A heme-binding site is contributed by C437.

This sequence belongs to the cytochrome P450 family. The cofactor is heme. In terms of tissue distribution, expressed only in differentiated keratinocytes in skin.

It localises to the endoplasmic reticulum membrane. It is found in the microsome membrane. It catalyses the reaction an organic molecule + reduced [NADPH--hemoprotein reductase] + O2 = an alcohol + oxidized [NADPH--hemoprotein reductase] + H2O + H(+). Its function is as follows. Cytochromes P450 are a group of heme-thiolate monooxygenases. In liver microsomes, this enzyme is involved in an NADPH-dependent electron transport pathway. It oxidizes a variety of structurally unrelated compounds, including steroids, fatty acids, and xenobiotics. In Mus musculus (Mouse), this protein is Cytochrome P450 2B19 (Cyp2b19).